The sequence spans 61 residues: Protein translocase subunit SecE (61 aa).

Residues 39–59 (VGIIIIGLIGFILSIVSQVLF) traverse the membrane as a helical segment.

It belongs to the SecE/SEC61-gamma family. In terms of assembly, component of the Sec protein translocase complex. Heterotrimer consisting of SecY (alpha), SecG (beta) and SecE (gamma) subunits. The heterotrimers can form oligomers, although 1 heterotrimer is thought to be able to translocate proteins. Interacts with the ribosome. May interact with SecDF, and other proteins may be involved.

It is found in the cell membrane. Essential subunit of the Sec protein translocation channel SecYEG. Clamps together the 2 halves of SecY. May contact the channel plug during translocation. This is Protein translocase subunit SecE from Methanosphaera stadtmanae (strain ATCC 43021 / DSM 3091 / JCM 11832 / MCB-3).